The sequence spans 167 residues: Probable phospholipid hydroperoxide glutathione peroxidase (167 aa).

Cysteine 41 is a catalytic residue.

It belongs to the glutathione peroxidase family.

It is found in the cytoplasm. It carries out the reaction a hydroperoxy polyunsaturated fatty acid + 2 glutathione = a hydroxy polyunsaturated fatty acid + glutathione disulfide + H2O. In terms of biological role, protects cells and enzymes from oxidative damage, by catalyzing the reduction of hydrogen peroxide, lipid peroxides and organic hydroperoxide, by glutathione. In Citrus sinensis (Sweet orange), this protein is Probable phospholipid hydroperoxide glutathione peroxidase (CSA).